The primary structure comprises 247 residues: Adenosylcobinamide-GDP ribazoletransferase (247 aa).

5 helical membrane-spanning segments follow: residues 34 to 54 (IITF…VFMV), 59 to 79 (CGAP…TGGF), 113 to 133 (GGLA…ELAL), 138 to 158 (ILAS…LLMY), and 194 to 214 (VLLP…AIFI).

Belongs to the CobS family. It depends on Mg(2+) as a cofactor.

The protein resides in the cell inner membrane. The enzyme catalyses alpha-ribazole + adenosylcob(III)inamide-GDP = adenosylcob(III)alamin + GMP + H(+). The catalysed reaction is alpha-ribazole 5'-phosphate + adenosylcob(III)inamide-GDP = adenosylcob(III)alamin 5'-phosphate + GMP + H(+). Its pathway is cofactor biosynthesis; adenosylcobalamin biosynthesis; adenosylcobalamin from cob(II)yrinate a,c-diamide: step 7/7. Its function is as follows. Joins adenosylcobinamide-GDP and alpha-ribazole to generate adenosylcobalamin (Ado-cobalamin). Also synthesizes adenosylcobalamin 5'-phosphate from adenosylcobinamide-GDP and alpha-ribazole 5'-phosphate. The polypeptide is Adenosylcobinamide-GDP ribazoletransferase (Escherichia coli O157:H7).